Here is a 311-residue protein sequence, read N- to C-terminus: MAKRDYLKITDTTLAEAHRVLRLAARLKEEPKGRRTTMLAGRAIAVVLEKASTRTRVSFEVGIAQLGAQPVVLSTQGSQLARGEPIRDTARVLARYCDAIAFRTSSTARLLEMAEASVPVINALSDDGHPVQVLSDIFTIQEALAASGDRTGIAGRRVAFLGDCASNMARSWLEAAQLFDFHLVLAGPEGYMPPADEVERARKTGHVTITHDPREGAAGADVVNTDVWASMGHEAEAEKRRAAFAGWTVDAKVMARAAQHSIVLHCLPAHRGEEIDDETLEGPRSRVWDQAENRLHVQKALMLWLLGVELA.

Residues 52 to 55, Q79, R103, and 129 to 132 each bind carbamoyl phosphate; these read STRT and HPVQ. L-ornithine is bound by residues N167, D226, and 230–231; that span reads SM. Residues 266 to 267 and R294 each bind carbamoyl phosphate; that span reads CL.

Belongs to the aspartate/ornithine carbamoyltransferase superfamily. OTCase family.

The protein localises to the cytoplasm. It carries out the reaction carbamoyl phosphate + L-ornithine = L-citrulline + phosphate + H(+). The protein operates within amino-acid biosynthesis; L-arginine biosynthesis; L-arginine from L-ornithine and carbamoyl phosphate: step 1/3. Its function is as follows. Reversibly catalyzes the transfer of the carbamoyl group from carbamoyl phosphate (CP) to the N(epsilon) atom of ornithine (ORN) to produce L-citrulline. This is Ornithine carbamoyltransferase from Sorangium cellulosum (strain So ce56) (Polyangium cellulosum (strain So ce56)).